We begin with the raw amino-acid sequence, 273 residues long: MSTIRPVFYVSDGTGITAETIGHSLLTQFSGFNFVTDRMSFIDDAEKARDAAMRVRAAGERYQVRPVVVNSCVDPQLSMILAESGALMLDVFAPFIEPLERELNAPRHSRVGRAHGMVDFETYHRRINAMNFALSHDDGIALNYDEADVILVAVSRAGKTPTCIYLALHYGIRAANYPLTDEDLENERLPPRLRNYRSKLFGLTIDPERLQQIRQERRANSRYSAAETCRREVAIAERMFQMERIPSLSTTNTSIEEISSKVLSTLGLQREMF.

An ADP-binding site is contributed by 153 to 160 (AVSRAGKT).

It belongs to the pyruvate, phosphate/water dikinase regulatory protein family. PSRP subfamily.

The enzyme catalyses [pyruvate, water dikinase] + ADP = [pyruvate, water dikinase]-phosphate + AMP + H(+). It catalyses the reaction [pyruvate, water dikinase]-phosphate + phosphate + H(+) = [pyruvate, water dikinase] + diphosphate. Functionally, bifunctional serine/threonine kinase and phosphorylase involved in the regulation of the phosphoenolpyruvate synthase (PEPS) by catalyzing its phosphorylation/dephosphorylation. The sequence is that of Putative phosphoenolpyruvate synthase regulatory protein from Xanthomonas oryzae pv. oryzae (strain MAFF 311018).